The sequence spans 125 residues: Histone H2A (125 aa).

Positions 1–18 (MSGRGKGGKVKAKAKSRS) are enriched in basic residues. Residues 1–21 (MSGRGKGGKVKAKAKSRSSRA) form a disordered region. Ser-2 is subject to N-acetylserine. Position 2 is a phosphoserine (Ser-2). Residue Lys-119 forms a Glycyl lysine isopeptide (Lys-Gly) (interchain with G-Cter in ubiquitin) linkage.

The protein belongs to the histone H2A family. The nucleosome is a histone octamer containing two molecules each of H2A, H2B, H3 and H4 assembled in one H3-H4 heterotetramer and two H2A-H2B heterodimers. The octamer wraps approximately 147 bp of DNA. In terms of processing, monoubiquitination of Lys-119 gives a specific tag for epigenetic transcriptional repression. Phosphorylation on Ser-2 is enhanced during mitosis. Phosphorylation on Ser-2 directly represses transcription.

The protein localises to the nucleus. The protein resides in the chromosome. Core component of nucleosome. Nucleosomes wrap and compact DNA into chromatin, limiting DNA accessibility to the cellular machineries which require DNA as a template. Histones thereby play a central role in transcription regulation, DNA repair, DNA replication and chromosomal stability. DNA accessibility is regulated via a complex set of post-translational modifications of histones, also called histone code, and nucleosome remodeling. The sequence is that of Histone H2A from Chironomus thummi thummi (Midge).